An 814-amino-acid polypeptide reads, in one-letter code: Acyl-coenzyme A dehydrogenase (814 aa).

Residue Glu-497 is the Proton acceptor of the active site.

Belongs to the acyl-CoA dehydrogenase family. FAD serves as cofactor.

It carries out the reaction a medium-chain 2,3-saturated fatty acyl-CoA + oxidized [electron-transfer flavoprotein] + H(+) = a medium-chain (2E)-enoyl-CoA + reduced [electron-transfer flavoprotein]. The enzyme catalyses a long-chain 2,3-saturated fatty acyl-CoA + oxidized [electron-transfer flavoprotein] + H(+) = a long-chain (2E)-enoyl-CoA + reduced [electron-transfer flavoprotein]. It functions in the pathway lipid metabolism; fatty acid beta-oxidation. Functionally, catalyzes the dehydrogenation of acyl-coenzymes A (acyl-CoAs) to 2-enoyl-CoAs, the first step of the beta-oxidation cycle of fatty acid degradation. Is required for the utilization of medium- and long-chain fatty acids as sole carbon sources for growth. The chain is Acyl-coenzyme A dehydrogenase (fadE) from Escherichia coli O157:H7.